Consider the following 484-residue polypeptide: Phosphomethylpyrimidine synthase (484 aa).

Substrate contacts are provided by residues N97, M126, Y156, H192, 212 to 214, 253 to 256, and E292; these read SRG and DSLR. H296 is a Zn(2+) binding site. Y319 contributes to the substrate binding site. H360 provides a ligand contact to Zn(2+). 3 residues coordinate [4Fe-4S] cluster: C440, C443, and C448.

Belongs to the ThiC family. The cofactor is [4Fe-4S] cluster.

The catalysed reaction is 5-amino-1-(5-phospho-beta-D-ribosyl)imidazole + S-adenosyl-L-methionine = 4-amino-2-methyl-5-(phosphooxymethyl)pyrimidine + CO + 5'-deoxyadenosine + formate + L-methionine + 3 H(+). The protein operates within cofactor biosynthesis; thiamine diphosphate biosynthesis. Catalyzes the synthesis of the hydroxymethylpyrimidine phosphate (HMP-P) moiety of thiamine from aminoimidazole ribotide (AIR) in a radical S-adenosyl-L-methionine (SAM)-dependent reaction. This is Phosphomethylpyrimidine synthase from Synechococcus sp. (strain CC9605).